The chain runs to 521 residues: 4-cresol dehydrogenase [hydroxylating] flavoprotein subunit (521 aa).

In terms of domain architecture, FAD-binding PCMH-type spans 54–268 (AAHAPSAAVT…VEIVDALRPL (215 aa)). At tyrosine 384 the chain carries O-8alpha-FAD tyrosine.

Tetramer of two cytochrome subunits and two flavoprotein subunits. FAD is required as a cofactor.

The enzyme catalyses 4-methylphenol + 4 oxidized [azurin] + H2O = 4 reduced [azurin] + 4-hydroxybenzaldehyde + 4 H(+). It participates in aromatic compound metabolism; p-cresol degradation. Functionally, catalyzes the azurin dependent hydroxylation of the methyl group of 4-methylphenol to form 4-hydroxybenzaldehyde. In Pseudomonas putida (Arthrobacter siderocapsulatus), this protein is 4-cresol dehydrogenase [hydroxylating] flavoprotein subunit (pchF).